The chain runs to 1505 residues: Probable serine/threonine-protein kinase DDB_G0280133 (1505 aa).

PAS domains are found at residues 2 to 72 (NTHN…FETG), 108 to 178 (RMFI…YHGG), and 215 to 284 (DMFK…TDSH). Disordered stretches follow at residues 282–348 (DSHD…FNHS) and 398–533 (RVYG…ESSY). Low complexity-rich tracts occupy residues 289–314 (QQQQ…TTST) and 328–344 (SSPP…TPTT). Composition is skewed to basic and acidic residues over residues 398 to 407 (RVYGKDKDKN) and 415 to 430 (ENKD…ESKE). The segment covering 431–443 (HRHSKEKKKRKKD) has biased composition (basic residues). The segment covering 448–468 (NNNNNNNNNNNNNNEQTSDSS) has biased composition (low complexity). The span at 479 to 489 (SKKKRSSKKKS) shows a compositional bias: basic residues. Over residues 515 to 532 (SSNSSSNSSHSNAPHESS) the composition is skewed to low complexity. The region spanning 542 to 805 (YTLGKTLGRG…IMNVLNHPWL (264 aa)) is the Protein kinase domain. Residues 548-556 (LGRGNYGVV) and Lys-571 contribute to the ATP site. The active-site Proton acceptor is Asp-684. Positions 855-960 (NILNNNNNNN…NNTNSIINNN (106 aa)) are enriched in low complexity. Disordered regions lie at residues 855-1048 (NILN…SHQQ), 1072-1091 (QPNQ…QLQQ), and 1181-1358 (QQQQ…DEEN). Residues 903-939 (NNNNNINNNINNNNNVNNNVNNNKNNNNNNNNNSNNN) are a coiled coil. Polar residues predominate over residues 961 to 974 (LYNQSLSPQNNNIY). Low complexity-rich tracts occupy residues 975 to 1013 (QHSP…QQQH) and 1022 to 1048 (QQHQ…SHQQ). Residues 1072 to 1082 (QPNQQVSFDTN) show a composition bias toward polar residues. Residues 1125 to 1189 (IQQIQQLQQQ…QQQQQQQQND (65 aa)) are a coiled coil. A compositionally biased stretch (basic and acidic residues) spans 1202 to 1271 (SKRDNSYNKR…NSRDNNRYNN (70 aa)). Low complexity predominate over residues 1272-1282 (RDNNNNNNSNN). Composition is skewed to basic and acidic residues over residues 1283–1301 (NRER…DYGK) and 1313–1326 (NKDK…KPDF). A compositionally biased stretch (polar residues) spans 1331–1347 (SLKNDSSSNYGTISSGR). Residues 1399–1463 (FLFGRNRDIA…NGTFLKGEKI (65 aa)) enclose the FHA domain.

Belongs to the protein kinase superfamily. CAMK Ser/Thr protein kinase family. SNF1 subfamily.

It catalyses the reaction L-seryl-[protein] + ATP = O-phospho-L-seryl-[protein] + ADP + H(+). The enzyme catalyses L-threonyl-[protein] + ATP = O-phospho-L-threonyl-[protein] + ADP + H(+). The chain is Probable serine/threonine-protein kinase DDB_G0280133 from Dictyostelium discoideum (Social amoeba).